The chain runs to 481 residues: Ribulose bisphosphate carboxylase large chain (481 aa).

Positions 1–2 (MS) are excised as a propeptide. Pro-3 is subject to N-acetylproline. At Lys-14 the chain carries N6,N6,N6-trimethyllysine. Substrate is bound by residues Asn-123 and Thr-173. The active-site Proton acceptor is the Lys-175. A substrate-binding site is contributed by Lys-177. 3 residues coordinate Mg(2+): Lys-201, Asp-203, and Glu-204. Lys-201 is modified (N6-carboxylysine). The active-site Proton acceptor is His-294. Arg-295, His-327, and Ser-379 together coordinate substrate.

Belongs to the RuBisCO large chain family. Type I subfamily. Heterohexadecamer of 8 large chains and 8 small chains; disulfide-linked. The disulfide link is formed within the large subunit homodimers. Requires Mg(2+) as cofactor. The disulfide bond which can form in the large chain dimeric partners within the hexadecamer appears to be associated with oxidative stress and protein turnover.

It localises to the plastid. It catalyses the reaction 2 (2R)-3-phosphoglycerate + 2 H(+) = D-ribulose 1,5-bisphosphate + CO2 + H2O. It carries out the reaction D-ribulose 1,5-bisphosphate + O2 = 2-phosphoglycolate + (2R)-3-phosphoglycerate + 2 H(+). Its function is as follows. RuBisCO catalyzes two reactions: the carboxylation of D-ribulose 1,5-bisphosphate, the primary event in carbon dioxide fixation, as well as the oxidative fragmentation of the pentose substrate in the photorespiration process. Both reactions occur simultaneously and in competition at the same active site. The polypeptide is Ribulose bisphosphate carboxylase large chain (Cuscuta sandwichiana (Kauna'oa)).